We begin with the raw amino-acid sequence, 90 residues long: Probable Fe(2+)-trafficking protein (90 aa).

The protein belongs to the Fe(2+)-trafficking protein family.

Its function is as follows. Could be a mediator in iron transactions between iron acquisition and iron-requiring processes, such as synthesis and/or repair of Fe-S clusters in biosynthetic enzymes. This is Probable Fe(2+)-trafficking protein from Bordetella avium (strain 197N).